Here is a 331-residue protein sequence, read N- to C-terminus: B-box zinc finger protein 21 (331 aa).

Residues cysteine 5, cysteine 8, cysteine 28, histidine 34, cysteine 60, cysteine 63, cysteine 83, and histidine 93 each contribute to the Zn(2+) site. Residues 5 to 47 (CDVCDKEEASVFCTADEASLCGGCDHQVHHANKLASKHLRFSL) form a B box-type 1; atypical zinc finger. The B box-type 2; atypical zinc-finger motif lies at 60-102 (CDICQDKKALLFCQQDRAILCKDCDSSIHAANEHTKKHDRFLL). Composition is skewed to low complexity over residues 115 to 126 (KPTSKSSSSSSS) and 228 to 238 (NNNNNNNNNNN). Disordered stretches follow at residues 115-167 (KPTS…GGDA) and 209-241 (DDDGVLPYMEPEDDNNTKRNNNNNNNNNNNTVS).

As to quaternary structure, interacts with COP1, HY5 and BBX32. Interacts with FLZ1.

It localises to the nucleus. Transcription activator that acts as a positive regulator of seedling photomorphogenesis. Acts downstream of COP1 and play an important role in early and long-term adjustment of the shade avoidance syndrome (SAS) responses in natural environments. This Arabidopsis thaliana (Mouse-ear cress) protein is B-box zinc finger protein 21.